A 246-amino-acid polypeptide reads, in one-letter code: Large ribosomal subunit protein uL2 (246 aa).

The tract at residues 197–226 is disordered; that stretch reads SPYAHPHGGGSHPKGGTPVPKTAPPGQKVG.

The protein belongs to the universal ribosomal protein uL2 family. As to quaternary structure, part of the 50S ribosomal subunit. Forms a bridge to the 30S subunit in the 70S ribosome.

One of the primary rRNA binding proteins. Required for association of the 30S and 50S subunits to form the 70S ribosome, for tRNA binding and peptide bond formation. It has been suggested to have peptidyltransferase activity; this is somewhat controversial. Makes several contacts with the 16S rRNA in the 70S ribosome. The chain is Large ribosomal subunit protein uL2 from Pyrobaculum islandicum (strain DSM 4184 / JCM 9189 / GEO3).